Reading from the N-terminus, the 1494-residue chain is Serine/threonine-protein kinase VPS15 (1494 aa).

Gly2 carries N-myristoyl glycine lipidation. One can recognise a Protein kinase domain in the interval 27–307; it reads LVLKEVLGRG…VFPNYFSPFL (281 aa). ATP-binding positions include 33–41 and Lys54; that span reads LGRGRFLKS. The Proton acceptor role is filled by Asp149. HEAT repeat units lie at residues 383–421, 480–517, 524–562, 610–646, 648–685, 687–724, and 727–764; these read NSKD…LYDS, DRLQ…LVRD, KIFP…TAYG, KTIA…FFGQ, QSND…FVGQ, SVEE…SSFL, and RALL…CLGA. Disordered stretches follow at residues 859–903 and 1037–1064; these read QSVE…TVEL and SASV…SVPD. Positions 1037–1047 are enriched in low complexity; sequence SASVTSEDASS. 7 WD repeats span residues 1079-1118, 1127-1166, 1184-1226, 1231-1270, 1276-1323, 1371-1409, and 1466-1494; these read EHRS…KDIS, LEGS…RGLG, KEGA…DAWT, PEEG…PVNS, ICPI…CHQV, PRLP…RSYC, and DSVQ…KVWK.

The protein belongs to the protein kinase superfamily. Ser/Thr protein kinase family. As to quaternary structure, interacts with VPS34. Component of a complex made of VPS38/USL1 and PI3K main subunits such as VPS15, ATG6/VPS30 and VPS34. Autophosphorylated. In terms of tissue distribution, mainly expressed in anthers, pollen grains and pollen tubes, and, to a lower extent, in other tissues and organs including seedlings, roots, stems, leaves, flowers, pitils and siliques.

The protein resides in the cytoplasm. It localises to the golgi apparatus. It is found in the trans-Golgi network membrane. The protein localises to the endosome membrane. The catalysed reaction is L-seryl-[protein] + ATP = O-phospho-L-seryl-[protein] + ADP + H(+). It carries out the reaction L-threonyl-[protein] + ATP = O-phospho-L-threonyl-[protein] + ADP + H(+). Serine/threonine-protein kinase required for cytoplasm to vacuole transport (Cvt) and autophagy as a part of the autophagy-specific VPS34 PI3-kinase complex I. Required for pollen development and germination, probably via the modulation of phosphatidylinositol 3-phosphate (PI3P) formation and vacuolar organization. The sequence is that of Serine/threonine-protein kinase VPS15 from Arabidopsis thaliana (Mouse-ear cress).